We begin with the raw amino-acid sequence, 260 residues long: Zinc import ATP-binding protein ZnuC (260 aa).

The ABC transporter domain occupies 14-229 (LTARNLCADR…PEFARLFGDQ (216 aa)). Residue 46-53 (GPNGAGKS) coordinates ATP.

This sequence belongs to the ABC transporter superfamily. Zinc importer (TC 3.A.1.15.5) family. The complex is composed of two ATP-binding proteins (ZnuC), two transmembrane proteins (ZnuB) and a solute-binding protein (ZnuA).

The protein resides in the cell inner membrane. It carries out the reaction Zn(2+)(out) + ATP(in) + H2O(in) = Zn(2+)(in) + ADP(in) + phosphate(in) + H(+)(in). Functionally, part of the ABC transporter complex ZnuABC involved in zinc import. Responsible for energy coupling to the transport system. This chain is Zinc import ATP-binding protein ZnuC, found in Magnetococcus marinus (strain ATCC BAA-1437 / JCM 17883 / MC-1).